A 549-amino-acid polypeptide reads, in one-letter code: Glucose-6-phosphate isomerase (549 aa).

Glu355 acts as the Proton donor in catalysis. Active-site residues include His386 and Lys514.

Belongs to the GPI family.

It localises to the cytoplasm. The enzyme catalyses alpha-D-glucose 6-phosphate = beta-D-fructose 6-phosphate. The protein operates within carbohydrate biosynthesis; gluconeogenesis. It functions in the pathway carbohydrate degradation; glycolysis; D-glyceraldehyde 3-phosphate and glycerone phosphate from D-glucose: step 2/4. Functionally, catalyzes the reversible isomerization of glucose-6-phosphate to fructose-6-phosphate. This Salmonella enteritidis PT4 (strain P125109) protein is Glucose-6-phosphate isomerase.